We begin with the raw amino-acid sequence, 193 residues long: Imidazoleglycerol-phosphate dehydratase (193 aa).

It belongs to the imidazoleglycerol-phosphate dehydratase family.

It is found in the cytoplasm. It catalyses the reaction D-erythro-1-(imidazol-4-yl)glycerol 3-phosphate = 3-(imidazol-4-yl)-2-oxopropyl phosphate + H2O. It functions in the pathway amino-acid biosynthesis; L-histidine biosynthesis; L-histidine from 5-phospho-alpha-D-ribose 1-diphosphate: step 6/9. This is Imidazoleglycerol-phosphate dehydratase from Saccharolobus islandicus (strain M.14.25 / Kamchatka #1) (Sulfolobus islandicus).